The chain runs to 930 residues: Serine/threonine-protein kinase ATG1 (930 aa).

The 304-residue stretch at 23–326 folds into the Protein kinase domain; the sequence is FIIDREIGKG…FENFFAHHVV (304 aa). Residues 29–37 and K52 contribute to the ATP site; that span reads IGKGSFAQV. Residue D166 is the Proton acceptor of the active site. Disordered regions lie at residues 336–468, 504–563, 853–874, and 904–930; these read DDIP…TEEE, GQNN…SASP, ISSGKEIAKDATQEGSDLDTEE, and NQAKHVSAMRRLSGDVTPRSVPSYGST. The segment covering 337 to 350 has biased composition (basic and acidic residues); it reads DIPKPPKRELETIR. Residues 377-393 are compositionally biased toward low complexity; that stretch reads SPKSPRSSPRSSTVNSS. Polar residues-rich tracts occupy residues 400 to 417 and 504 to 531; these read RQSQNAERRLSISSHNSG and GQNNSSAKSSPLQRRYTQQGSATSTTGA. Positions 629–897 are ATG13-binding; that stretch reads AAQAIEEFAT…RLNMVRKKQQ (269 aa).

The protein belongs to the protein kinase superfamily. Ser/Thr protein kinase family. APG1/unc-51/ULK1 subfamily. In terms of assembly, homodimer. Dimerization requires the presence of ATG13. Forms a ternary complex with ATG13 and ATG17.

The protein resides in the cytoplasm. The protein localises to the preautophagosomal structure membrane. It catalyses the reaction L-seryl-[protein] + ATP = O-phospho-L-seryl-[protein] + ADP + H(+). The catalysed reaction is L-threonyl-[protein] + ATP = O-phospho-L-threonyl-[protein] + ADP + H(+). Serine/threonine protein kinase involved in the cytoplasm to vacuole transport (Cvt) and found to be essential in autophagy, where it is required for the formation of autophagosomes. Involved in the clearance of protein aggregates which cannot be efficiently cleared by the proteasome. Required for selective autophagic degradation of the nucleus (nucleophagy) as well as for mitophagy which contributes to regulate mitochondrial quantity and quality by eliminating the mitochondria to a basal level to fulfill cellular energy requirements and preventing excess ROS production. Also involved in endoplasmic reticulum-specific autophagic process, in selective removal of ER-associated degradation (ERAD) substrates. Plays a key role in ATG9 and ATG23 cycling through the pre-autophagosomal structure and is necessary to promote ATG18 binding to ATG9 through phosphorylation of ATG9. Catalyzes phosphorylation of ATG4, decreasing the interaction between ATG4 and ATG8 and impairing deconjugation of PE-conjugated forms of ATG8. Contributes to conidiation by regulating the conidial levels of the conidiation-related protein CP15 and mediates fungal oxidation resistance by controlling total superoxide dismutase (SOD) activity. In Beauveria bassiana (strain ARSEF 2860) (White muscardine disease fungus), this protein is Serine/threonine-protein kinase ATG1.